The sequence spans 777 residues: Probable aconitate hydratase, mitochondrial (777 aa).

A mitochondrion-targeting transit peptide spans 1 to 26 (MNSLLRLSHLAGPAHYRALHSSSSIW). Residues Gln96 and 189–191 (DSH) each bind substrate. Residues Cys382, Cys445, and Cys448 each contribute to the [4Fe-4S] cluster site. Substrate-binding residues include Arg471 and Arg476. Positions 534 to 555 (YDPGEDTFQAPSGSGQVDVSPS) are disordered. Positions 542–555 (QAPSGSGQVDVSPS) are enriched in polar residues. Substrate is bound by residues Arg601 and 664 to 665 (SR).

Belongs to the aconitase/IPM isomerase family. As to quaternary structure, monomer. [4Fe-4S] cluster serves as cofactor.

The protein resides in the mitochondrion. The catalysed reaction is citrate = D-threo-isocitrate. The protein operates within carbohydrate metabolism; tricarboxylic acid cycle; isocitrate from oxaloacetate: step 2/2. In terms of biological role, catalyzes the isomerization of citrate to isocitrate via cis-aconitate. This chain is Probable aconitate hydratase, mitochondrial, found in Caenorhabditis elegans.